Reading from the N-terminus, the 187-residue chain is Phosphatidylethanolamine-binding protein 1 (187 aa).

Residues S6 and S13 each carry the phosphoserine modification. T42 carries the phosphothreonine modification. 4 positions are modified to phosphoserine: S52, S54, S98, and S153. The interaction with RAF1 stretch occupies residues 93–134 (KGNDISSGTVLSDYVGSGPPKGTGLHRYVWLVYEQARPLKCD).

It belongs to the phosphatidylethanolamine-binding protein family. As to quaternary structure, has a tendency to form dimers by disulfide cross-linking. Interacts with RAF1 and this interaction is enhanced if RAF1 is phosphorylated on residues 'Ser-338', 'Ser-339', 'Tyr-340' and 'Tyr-341'. Interacts with ALOX15; in response to IL13/interleukin-13, prevents the interaction of PEBP1 with RAF1 to activate the ERK signaling cascade.

The protein resides in the cytoplasm. Binds ATP, opioids and phosphatidylethanolamine. Has lower affinity for phosphatidylinositol and phosphatidylcholine. Serine protease inhibitor which inhibits thrombin, neuropsin and chymotrypsin but not trypsin, tissue type plasminogen activator and elastase. Inhibits the kinase activity of RAF1 by inhibiting its activation and by dissociating the RAF1/MEK complex and acting as a competitive inhibitor of MEK phosphorylation. Functionally, HCNP may be involved in the function of the presynaptic cholinergic neurons of the central nervous system. HCNP increases the production of choline acetyltransferase but not acetylcholinesterase. Seems to be mediated by a specific receptor. This Macaca fascicularis (Crab-eating macaque) protein is Phosphatidylethanolamine-binding protein 1 (PEBP1).